The following is a 139-amino-acid chain: Prefoldin subunit alpha (139 aa).

The protein belongs to the prefoldin subunit alpha family. In terms of assembly, heterohexamer of two alpha and four beta subunits.

It localises to the cytoplasm. Its function is as follows. Molecular chaperone capable of stabilizing a range of proteins. Seems to fulfill an ATP-independent, HSP70-like function in archaeal de novo protein folding. The protein is Prefoldin subunit alpha of Picrophilus torridus (strain ATCC 700027 / DSM 9790 / JCM 10055 / NBRC 100828 / KAW 2/3).